We begin with the raw amino-acid sequence, 170 residues long: Small ribosomal subunit protein uS5 (170 aa).

In terms of domain architecture, S5 DRBM spans L12 to V75.

The protein belongs to the universal ribosomal protein uS5 family. In terms of assembly, part of the 30S ribosomal subunit. Contacts proteins S4 and S8.

Functionally, with S4 and S12 plays an important role in translational accuracy. Its function is as follows. Located at the back of the 30S subunit body where it stabilizes the conformation of the head with respect to the body. This is Small ribosomal subunit protein uS5 from Wolbachia pipientis wMel.